The primary structure comprises 865 residues: Catenin alpha-2 (865 aa).

The segment covering 823 to 839 (PEKKPLVKREKPEECQT) has biased composition (basic and acidic residues). A disordered region spans residues 823–851 (PEKKPLVKREKPEECQTRVRRGSQKKHIS). The span at 840 to 850 (RVRRGSQKKHI) shows a compositional bias: basic residues.

It belongs to the vinculin/alpha-catenin family.

It is found in the cell membrane. The protein resides in the cytoplasm. It localises to the cytoskeleton. The protein localises to the cell junction. Its subcellular location is the adherens junction. It is found in the cell projection. The protein resides in the axon. It localises to the nucleus. Functionally, may function as a linker between cadherin adhesion receptors and the cytoskeleton to regulate cell-cell adhesion and differentiation in the nervous system. This Danio rerio (Zebrafish) protein is Catenin alpha-2 (Ctnna2).